Consider the following 405-residue polypeptide: L-carnitine CoA-transferase (405 aa).

CoA contacts are provided by K97 and R104. The active-site Nucleophile is D169.

The protein belongs to the CoA-transferase III family. CaiB subfamily. In terms of assembly, homodimer.

The protein resides in the cytoplasm. The catalysed reaction is crotonobetainyl-CoA + (R)-carnitine = crotonobetaine + (R)-carnitinyl-CoA. It catalyses the reaction 4-(trimethylamino)butanoyl-CoA + (R)-carnitine = (R)-carnitinyl-CoA + 4-(trimethylamino)butanoate. It functions in the pathway amine and polyamine metabolism; carnitine metabolism. Catalyzes the reversible transfer of the CoA moiety from gamma-butyrobetainyl-CoA to L-carnitine to generate L-carnitinyl-CoA and gamma-butyrobetaine. Is also able to catalyze the reversible transfer of the CoA moiety from gamma-butyrobetainyl-CoA or L-carnitinyl-CoA to crotonobetaine to generate crotonobetainyl-CoA. The protein is L-carnitine CoA-transferase of Escherichia coli O127:H6 (strain E2348/69 / EPEC).